The following is a 263-amino-acid chain: Hatching enzyme 1.2 (263 aa).

An N-terminal signal peptide occupies residues 1 to 19 (MDIRASLSILLLLFGLSQA). The propeptide at 20-64 (SPLREFEAIFVSEPETVDITTQILETNKGSSEVLFEGDVVLPKNR) is activation peptide. In terms of domain architecture, Peptidase M12A spans 65–263 (NALICEDKSC…ILRINKLYGC (199 aa)). Intrachain disulfides connect Cys-69/Cys-74, Cys-114/Cys-263, and Cys-135/Cys-155. His-163 provides a ligand contact to Zn(2+). The active site involves Glu-164. His-167 and His-173 together coordinate Zn(2+).

It depends on Zn(2+) as a cofactor. As to expression, expressed in cells of the hatching gland.

Its subcellular location is the secreted. It catalyses the reaction Hydrolysis of the inner layer of fish egg envelope. Also hydrolysis of casein and small molecule substrates such as succinyl-Leu-Leu-Val-Tyr-|-7-(4-methyl)coumarylamide.. Metalloendopeptidase which participates in the breakdown of the egg envelope at the time of hatching. Cleaves the N-terminal regions of the zona pellucia glycoproteins ZP2 and ZP3, where it specifically recognizes the peptide sequences TVQQS-|-DYLIK (major site) and KLMLK-|-APEPF (minor site). The chain is Hatching enzyme 1.2 from Danio rerio (Zebrafish).